We begin with the raw amino-acid sequence, 263 residues long: Zinc finger protein STAMENLESS 1 (263 aa).

The disordered stretch occupies residues 1 to 51; sequence MNSSRRQEGSPLDLNNLPDEFGKQTVESSTTTAASSAEASRVTKKKSNGGK. Over residues 25 to 40 the composition is skewed to low complexity; that stretch reads TVESSTTTAASSAEAS. A C2H2-type zinc finger spans residues 58–80; sequence YECRFCSLKFCKSQALGGHMNRH.

Expressed in leaf primordia, inflorescence meristem, rachis branch meristems, floral meristem and floral organ primordia.

Its subcellular location is the nucleus. Regulates floral organ identity and cell proliferation in the inner floral whorls. Probably specifies the identities of lodicule and stamen through positive regulation of MADS16 expression. May contribute to morphogenesis by suppressing OSH1 expression in the lateral organs. This chain is Zinc finger protein STAMENLESS 1 (SL1), found in Oryza sativa subsp. japonica (Rice).